A 217-amino-acid polypeptide reads, in one-letter code: Frizzled-8 (217 aa).

Residues 1–26 (AGAAELQPELAVAEHVRYESTGPALC) are Extracellular-facing. Residues 27–47 (TVVFLLVYFFGMASSIWWVIL) traverse the membrane as a helical segment. At 48-69 (SLTWFLAAGMKWGNEAIAGYAQ) the chain is on the cytoplasmic side. Residues 70–90 (YFHLAAWLLPSVKSIAVLALS) traverse the membrane as a helical segment. The Extracellular portion of the chain corresponds to 91-113 (SVDGDPVAGICYVGNQSLENLRG). A glycan (N-linked (GlcNAc...) asparagine) is linked at N105. A helical transmembrane segment spans residues 114–134 (FVLAPLVVYLFTGSLFLLAGF). At 135-160 (VSLFRIRSVIKQGGTKTDKLEKLMIR) the chain is on the cytoplasmic side. Residues 161 to 181 (IGIFTVLYTVPATIVIACYIY) traverse the membrane as a helical segment. The Extracellular portion of the chain corresponds to 182–209 (EQHNREAWEQAQNCSCPGDPHRPKPDYA). N194 carries N-linked (GlcNAc...) asparagine glycosylation. Residues 210–217 (VFMLKYFM) form a helical membrane-spanning segment.

The protein belongs to the G-protein coupled receptor Fz/Smo family.

The protein localises to the membrane. Its subcellular location is the cell membrane. Functionally, receptor for Wnt proteins. Most of frizzled receptors are coupled to the beta-catenin canonical signaling pathway, which leads to the activation of disheveled proteins, inhibition of GSK-3 kinase, nuclear accumulation of beta-catenin and activation of Wnt target genes. A second signaling pathway involving PKC and calcium fluxes has been seen for some family members, but it is not yet clear if it represents a distinct pathway or if it can be integrated in the canonical pathway, as PKC seems to be required for Wnt-mediated inactivation of GSK-3 kinase. Both pathways seem to involve interactions with G-proteins. May be involved in transduction and intercellular transmission of polarity information during tissue morphogenesis and/or in differentiated tissues. The polypeptide is Frizzled-8 (FZD8) (Gallus gallus (Chicken)).